Consider the following 1755-residue polypeptide: Periplakin (1755 aa).

Positions 1 to 11 are enriched in basic residues; it reads MHSLFRKRNKG. The segment at 1-20 is disordered; sequence MHSLFRKRNKGKYSPTVQTR. The residue at position 14 (serine 14) is a Phosphoserine. Coiled-coil stretches lie at residues 16–125 and 182–387; these read TVQT…KQMY and LAKD…QQVV. 3 Spectrin repeats span residues 214-315, 321-483, and 503-610; these read QDYM…SHLK, HQFH…HALQ, and RQLL…EKVD. One can recognise an SH3 domain in the interval 397-453; the sequence is LKPIPVEALCDFESDQGLISRGYSYTLQKNNGESWELTDSTGKKLAAPAVCFIIPPT. Serine 463 bears the Phosphoserine mark. Coiled-coil stretches lie at residues 611 to 819 and 883 to 1644; these read VANR…RNSH and LSSG…SVAV. Phosphoserine is present on residues serine 885, serine 947, serine 1583, and serine 1656. An interacts with BFSP2 and VIM region spans residues 1556-1755; that stretch reads ELDFLREENH…ELAVLVSGQK (200 aa). Plectin repeat units follow at residues 1650-1684 and 1699-1734; these read ENHL…WKMF and VKGP…AAQY.

This sequence belongs to the plakin or cytolinker family. Homodimer or a heterodimer with EVPL. Found in a complex composed of PPL (via C-terminal linker domain), BFSP1 and BFSP2 in the retinal lens. Within the complex interacts (via C-terminal linker domain) with BFSP2. Interacts with VIM. Binds to the PH domain of AKT1. Interacts with FCGR1A. May interact with PPHLN1. In terms of tissue distribution, expressed in the retinal lens (at protein level).

It localises to the cell junction. Its subcellular location is the desmosome. The protein resides in the cytoplasm. It is found in the cytoskeleton. The protein localises to the cell membrane. Its function is as follows. Component of the cornified envelope of keratinocytes. May link the cornified envelope to desmosomes and intermediate filaments. May act as a localization signal in PKB/AKT-mediated signaling. The polypeptide is Periplakin (Ppl) (Mus musculus (Mouse)).